The primary structure comprises 859 residues: Fanconi anemia group B protein (859 aa).

Position 2 is an N-acetylthreonine (Thr-2).

As to quaternary structure, belongs to the multisubunit FA complex composed of FANCA, FANCB, FANCC, FANCE, FANCF, FANCG, FANCL/PHF9 and FANCM. The complex is not found in FA patients.

The protein resides in the nucleus. In terms of biological role, DNA repair protein required for FANCD2 ubiquitination. The sequence is that of Fanconi anemia group B protein (FANCB) from Homo sapiens (Human).